Reading from the N-terminus, the 436-residue chain is tRNA-2-methylthio-N(6)-dimethylallyladenosine synthase (436 aa).

Residues 5-120 (KKLFIQTLGC…IKDVVDVKGA (116 aa)) form the MTTase N-terminal domain. Residues C14, C51, C83, C152, C156, and C159 each coordinate [4Fe-4S] cluster. The region spanning 138-372 (KTNKYRASVN…IELHKRYLEE (235 aa)) is the Radical SAM core domain. Positions 375 to 436 (PKLIGETLNI…RTSLKGEVVN (62 aa)) constitute a TRAM domain.

This sequence belongs to the methylthiotransferase family. MiaB subfamily. Monomer. [4Fe-4S] cluster is required as a cofactor.

It localises to the cytoplasm. The catalysed reaction is N(6)-dimethylallyladenosine(37) in tRNA + (sulfur carrier)-SH + AH2 + 2 S-adenosyl-L-methionine = 2-methylsulfanyl-N(6)-dimethylallyladenosine(37) in tRNA + (sulfur carrier)-H + 5'-deoxyadenosine + L-methionine + A + S-adenosyl-L-homocysteine + 2 H(+). Its function is as follows. Catalyzes the methylthiolation of N6-(dimethylallyl)adenosine (i(6)A), leading to the formation of 2-methylthio-N6-(dimethylallyl)adenosine (ms(2)i(6)A) at position 37 in tRNAs that read codons beginning with uridine. This Aliarcobacter butzleri (strain RM4018) (Arcobacter butzleri) protein is tRNA-2-methylthio-N(6)-dimethylallyladenosine synthase.